Consider the following 926-residue polypeptide: Nitrate reductase [NADH] (926 aa).

The interval 1–85 (MAASVDRQYH…SDSEEDDDEN (85 aa)) is disordered. Residues 36–46 (YTFSNPPSSNG) are compositionally biased toward polar residues. Over residues 58 to 73 (DNNSNSNNGSNNNNNR) the composition is skewed to low complexity. A Mo-molybdopterin-binding site is contributed by Cys-204. A Cytochrome b5 heme-binding domain is found at 551 to 626 (SKMYSMSEVK…LEDFRIGELI (76 aa)). His-586 and His-609 together coordinate heme. The FAD-binding FR-type domain maps to 670–782 (RVKIPCKLIE…KGPLGHIEYL (113 aa)). Residues 722–725 (RAYT), 739–743 (VVKVY), Phe-744, Phe-751, 756–758 (VMS), and Thr-809 contribute to the FAD site.

Belongs to the nitrate reductase family. In terms of assembly, homodimer. The cofactor is FAD. Heme is required as a cofactor. It depends on Mo-molybdopterin as a cofactor.

It carries out the reaction nitrite + NAD(+) + H2O = nitrate + NADH + H(+). Nitrate reductase is a key enzyme involved in the first step of nitrate assimilation in plants, fungi and bacteria. This Spinacia oleracea (Spinach) protein is Nitrate reductase [NADH] (NIA).